Reading from the N-terminus, the 162-residue chain is Caveolin-2 (162 aa).

Over 1–86 the chain is Cytoplasmic; that stretch reads MGLETEKADV…FEISKYVMYK (86 aa). Tyr19 is modified (phosphotyrosine; by SRC). Phosphoserine is present on residues Ser20 and Ser23. At Tyr27 the chain carries Phosphotyrosine; by SRC. A Phosphoserine modification is found at Ser36. Residues 87–107 constitute an intramembrane region (helical); the sequence is FLTVFLAIPLAFLAGILFATL. Topologically, residues 108 to 162 are cytoplasmic; the sequence is SCLHIWIIMPFVKTCLMVLPSVQTIWKSVTDAIIAPLCTSIGRSFSSVSLQLSQD.

This sequence belongs to the caveolin family. As to quaternary structure, monomer or homodimer. Interacts with CAV1; the interaction forms a stable heterooligomeric complex that is required for targeting to lipid rafts and for caveolae formation. Tyrosine phosphorylated forms do not form heterooligomers with the Tyr-19-phosphorylated form existing as a monomer or dimer, and the Tyr-27-form as a monomer only. Interacts (tyrosine phosphorylated form) with the SH2 domain-containing proteins, RASA1, NCK1 and SRC. Interacts (tyrosine phosphorylated form) with INSR, the interaction (Tyr-27-phosphorylated form) is increased on insulin stimulation. Interacts (Tyr-19 phosphorylated form) with MAPK1 (phosphorylated form); the interaction, promoted by insulin, leads to nuclear location and MAPK1 activation. Interacts with STAT3; the interaction is increased on insulin-induced tyrosine phosphorylation leading to STAT activation. In terms of processing, phosphorylated on serine and tyrosine residues. CAV1 promotes phosphorylation on Ser-23 which then targets the complex to the plasma membrane, lipid rafts and caveolae. Phosphorylation on Ser-36 appears to modulate mitosis in endothelial cells. Phosphorylation on both Tyr-19 and Tyr-27 is required for insulin-induced 'Ser-727' phosphorylation of STAT3 and its activation. Phosphorylation on Tyr-19 is required for insulin-induced phosphorylation of MAPK1 and DNA binding of STAT3. Tyrosine phosphorylation is induced by both EGF and insulin (By. similarity).

The protein resides in the nucleus. It localises to the cytoplasm. The protein localises to the golgi apparatus membrane. Its subcellular location is the cell membrane. It is found in the membrane. The protein resides in the caveola. Its function is as follows. May act as a scaffolding protein within caveolar membranes. Interacts directly with G-protein alpha subunits and can functionally regulate their activity. Acts as an accessory protein in conjunction with CAV1 in targeting to lipid rafts and driving caveolae formation. The Ser-36 phosphorylated form has a role in modulating mitosis in endothelial cells. Positive regulator of cellular mitogenesis of the MAPK signaling pathway. Required for the insulin-stimulated nuclear translocation and activation of MAPK1 and STAT3, and the subsequent regulation of cell cycle progression. This is Caveolin-2 (CAV2) from Plecturocebus moloch (Dusky titi monkey).